The sequence spans 519 residues: Bifunctional NAD(P)H-hydrate repair enzyme Nnr (519 aa).

Residues 1-233 (MMRCGEGYPG…DIGIPPAAEI (233 aa)) form an NAD(P)H-hydrate epimerase region. A YjeF N-terminal domain is found at 25-233 (MAAADINAEY…DIGIPPAAEI (209 aa)). Positions 71–75 (GNGGD) are NADPHX 1; for epimerase activity. Residues Asn72 and Asp144 each coordinate K(+). Residues 148-154 (GTGVRGS) are NADPHX 1; for epimerase activity. Residue Asp177 coordinates (6S)-NADPHX. Residue Ser180 participates in K(+) binding. Positions 235-515 (MGPGDLLRIP…DMIPSVMDPG (281 aa)) constitute a YjeF C-terminal domain. The segment at 235–519 (MGPGDLLRIP…SVMDPGFYGF (285 aa)) is ADP-dependent (S)-NAD(P)H-hydrate dehydratase. Residue Gly338 coordinates (6S)-NADPHX. The NADPHX 2; for dehydratase activity stretch occupies residues 389 to 395 (HMAEFSS). Residues 428–432 (KGRID) and 447–456 (CPGMTVGGTG) each bind ADP. Asp457 contacts (6S)-NADPHX.

The protein in the N-terminal section; belongs to the NnrE/AIBP family. In the C-terminal section; belongs to the NnrD/CARKD family. K(+) serves as cofactor.

It carries out the reaction (6S)-NADHX + ADP = AMP + phosphate + NADH + H(+). The catalysed reaction is (6S)-NADPHX + ADP = AMP + phosphate + NADPH + H(+). The enzyme catalyses (6R)-NADHX = (6S)-NADHX. It catalyses the reaction (6R)-NADPHX = (6S)-NADPHX. Its function is as follows. Bifunctional enzyme that catalyzes the epimerization of the S- and R-forms of NAD(P)HX and the dehydration of the S-form of NAD(P)HX at the expense of ADP, which is converted to AMP. This allows the repair of both epimers of NAD(P)HX, a damaged form of NAD(P)H that is a result of enzymatic or heat-dependent hydration. The chain is Bifunctional NAD(P)H-hydrate repair enzyme Nnr (nnr) from Methanothermobacter thermautotrophicus (strain ATCC 29096 / DSM 1053 / JCM 10044 / NBRC 100330 / Delta H) (Methanobacterium thermoautotrophicum).